The following is a 1817-amino-acid chain: Nuclear pore complex protein Nup98-Nup96 (1817 aa).

The segment at 1-156 is FG repeats 1; the sequence is MFNKSFGTPF…LFGPSSFTAA (156 aa). The tract at residues 157 to 213 is GLEBS; interaction with RAE1; that stretch reads PTGTTIKFNPPTGTDTMVKAGVSTNISTKHQCITAMKEYESKSLEELRLEDYQANRK. The segment at 214-480 is FG repeats 2; it reads GPQNQVGAGT…NTTTATLGFG (267 aa). Residues 512–535 form a disordered region; sequence PFGDSPLFRNPMSDPKKKEERLKP. Ser-524 carries the phosphoserine modification. Over residues 525-534 the composition is skewed to basic and acidic residues; sequence DPKKKEERLK. Residue Lys-563 forms a Glycyl lysine isopeptide (Lys-Gly) (interchain with G-Cter in SUMO2) linkage. Lys-603 carries the N6-acetyllysine; alternate modification. Lys-603 is covalently cross-linked (Glycyl lysine isopeptide (Lys-Gly) (interchain with G-Cter in SUMO2); alternate). A phosphoserine mark is found at Ser-608, Ser-612, Ser-618, Ser-623, Ser-625, and Ser-653. A disordered region spans residues 614–633; that stretch reads VNRDSENLASPSEYPENGER. The tract at residues 662 to 682 is disordered; sequence PIAKPIPQTPESAGNKHSNSN. Residue Lys-665 forms a Glycyl lysine isopeptide (Lys-Gly) (interchain with G-Cter in SUMO2) linkage. Thr-670 carries the post-translational modification Phosphothreonine. Positions 670–682 are enriched in polar residues; it reads TPESAGNKHSNSN. A phosphoserine mark is found at Ser-673, Ser-681, Ser-683, and Ser-839. One can recognise a Peptidase S59 domain in the interval 738-880; the sequence is KVGYYTIPSM…GSWVFKVSHF (143 aa). Ser-881 functions as the Nucleophile in the catalytic mechanism. The interval 886-937 is disordered; the sequence is QDSDEEEEEHPSKTSTKKLKTAPLPPASQTTPLQMALNGKPAPPPQSQSPEV. 3 positions are modified to phosphoserine: Ser-888, Ser-897, and Ser-934. Thr-1000 carries the phosphothreonine modification. Phosphoserine occurs at positions 1023, 1028, 1043, 1060, and 1064. Position 1070 is a phosphothreonine (Thr-1070). Ser-1329 bears the Phosphoserine mark. Position 1772 is a phosphothreonine (Thr-1772).

This sequence belongs to the nucleoporin GLFG family. As to quaternary structure, part of the nuclear pore complex (NPC). Interacts directly with NUP96. Part of the Nup160 subcomplex in the nuclear pore which is composed of NUP160, NUP133, NUP107 and NUP96; this complex plays a role in RNA export and in tethering NUP98 and NUP153 to the nucleus. Interacts with RAE1. Does not interact with TPR. Interacts with NUP88. Interacts directly with NUP88 and NUP214, subunits of the cytoplasmic filaments of the NPC. Interacts (via N-terminus) with DHX9 (via DRBM, OB-fold and RGG domains); this interaction occurs in a RNA-dependent manner and stimulates DHX9-mediated ATPase activity. In terms of assembly, (Microbial infection) Interacts with HIV-1 capsid protein P24 and nucleocapsid protein P7 (in vitro); the interaction may promote the integration of the virus in the host nucleus (in vitro). (Microbial infection) Interacts with vesicular stomatitis virus protein M. As to quaternary structure, (Microbial infection) Interacts with SARS coronavirus-2/SARS-CoV-2 ORF6 protein; the interaction blocks STAT1 nuclear translocation, antagonizes interferon signaling and blocks mRNA nuclear export (ex vivo). In terms of assembly, (Microbial infection) Interacts with SARS coronavirus/SARS-CoV ORF6 protein. In terms of processing, isoform 1 to isoform 4 are autoproteolytically cleaved to yield Nup98 and Nup96 or Nup98 only, respectively. Cleaved Nup98 is necessary for the targeting of Nup98 to the nuclear pore and the interaction with Nup96. Post-translationally, proteolytically degraded after poliovirus (PV) infection; degradation is partial and NCP- and TPR-binding domains withstand degradation.

It localises to the nucleus membrane. The protein localises to the nucleus. It is found in the nuclear pore complex. The protein resides in the nucleoplasm. Functionally, plays a role in the nuclear pore complex (NPC) assembly and/or maintenance. NUP98 and NUP96 are involved in the bidirectional transport across the NPC. May anchor NUP153 and TPR to the NPC. In cooperation with DHX9, plays a role in transcription and alternative splicing activation of a subset of genes. Involved in the localization of DHX9 in discrete intranuclear foci (GLFG-body). In terms of biological role, (Microbial infection) Interacts with HIV-1 capsid protein P24 and nucleocapsid protein P7 and may thereby promote the integration of the virus in the host nucleus (in vitro). Binding affinity to HIV-1 CA-NC complexes bearing the capsid change Asn-74-Asp is reduced (in vitro). This is Nuclear pore complex protein Nup98-Nup96 from Homo sapiens (Human).